Here is a 301-residue protein sequence, read N- to C-terminus: Probable alpha-L-glutamate ligase (301 aa).

In terms of domain architecture, ATP-grasp spans 104 to 287 (LQLLSRKGVG…IAGMVIDFIE (184 aa)). ATP is bound by residues Lys141, 178-179 (EY), Asp187, and 211-213 (RSN). 3 residues coordinate Mg(2+): Asp248, Glu260, and Asn262. Residues Asp248, Glu260, and Asn262 each contribute to the Mn(2+) site.

It belongs to the RimK family. Mg(2+) is required as a cofactor. The cofactor is Mn(2+).

The chain is Probable alpha-L-glutamate ligase from Pseudoalteromonas translucida (strain TAC 125).